Here is a 1047-residue protein sequence, read N- to C-terminus: Formin-like protein 3 (1047 aa).

A lipid anchor (N-myristoyl glycine) is attached at Gly-2. One can recognise a GBD/FH3 domain in the interval Val-22–Glu-462. Positions Ala-520–Pro-561 are disordered. A compositionally biased stretch (pro residues) spans Ala-527–Pro-546. An FH2 domain is found at Ile-580–Ala-970. The 38-residue stretch at Asp-1000 to Cys-1037 folds into the DAD domain.

Belongs to the formin homology family.

Its subcellular location is the cytoplasm. The protein localises to the cell membrane. Required for developmental angiogenesis, but not for vasculogenesis. This is Formin-like protein 3 (fmnl3) from Danio rerio (Zebrafish).